Consider the following 171-residue polypeptide: Neuronal vesicle trafficking-associated protein 2 (171 aa).

Over residues 1–10 the composition is skewed to polar residues; sequence MVKLNSNPSE. The tract at residues 1-21 is disordered; it reads MVKLNSNPSEKGTKPPSVEDG. The Cytoplasmic segment spans residues 1 to 71; the sequence is MVKLNSNPSE…FRVPKIAEFT (71 aa). A helical; Signal-anchor for type II membrane protein transmembrane segment spans residues 72–92; it reads VTILVSLALAFLACIVFLVVY. Over 93–171 the chain is Lumenal; the sequence is KAFTYDHSCP…EPKPPKTQGH (79 aa).

The protein belongs to the NSG family.

It localises to the membrane. Its subcellular location is the golgi apparatus. The protein localises to the trans-Golgi network membrane. The protein resides in the cell projection. It is found in the dendrite. It localises to the endosome membrane. Its subcellular location is the early endosome membrane. The protein localises to the late endosome membrane. The protein resides in the lysosome lumen. It is found in the cytoplasmic vesicle membrane. It localises to the golgi stack membrane. Its subcellular location is the endosome. The protein localises to the multivesicular body membrane. This is Neuronal vesicle trafficking-associated protein 2 from Homo sapiens (Human).